A 602-amino-acid polypeptide reads, in one-letter code: RecBCD enzyme subunit RecD (602 aa).

ATP is bound at residue 171 to 178 (GGPGTGKT).

It belongs to the RecD family. Heterotrimer of RecB, RecC and RecD. All subunits contribute to DNA-binding.

It catalyses the reaction Couples ATP hydrolysis with the unwinding of duplex DNA at the replication fork by translocating in the 5'-3' direction. This creates two antiparallel DNA single strands (ssDNA). The leading ssDNA polymer is the template for DNA polymerase III holoenzyme which synthesizes a continuous strand.. The enzyme catalyses ATP + H2O = ADP + phosphate + H(+). A helicase/nuclease that prepares dsDNA breaks (DSB) for recombinational DNA repair. Binds to DSBs and unwinds DNA via a highly rapid and processive ATP-dependent bidirectional helicase activity. Unwinds dsDNA until it encounters a Chi (crossover hotspot instigator) sequence from the 3' direction. Cuts ssDNA a few nucleotides 3' to the Chi site. The properties and activities of the enzyme are changed at Chi. The Chi-altered holoenzyme produces a long 3'-ssDNA overhang and facilitates RecA-binding to the ssDNA for homologous DNA recombination and repair. Holoenzyme degrades any linearized DNA that is unable to undergo homologous recombination. In the holoenzyme this subunit has ssDNA-dependent ATPase and 5'-3' helicase activity. When added to pre-assembled RecBC greatly stimulates nuclease activity and augments holoenzyme processivity. Negatively regulates the RecA-loading ability of RecBCD. The polypeptide is RecBCD enzyme subunit RecD (Buchnera aphidicola subsp. Acyrthosiphon pisum (strain APS) (Acyrthosiphon pisum symbiotic bacterium)).